A 1227-amino-acid chain; its full sequence is Methionine synthase (1227 aa).

The region spanning 2–325 is the Hcy-binding domain; the sequence is SSKVEQLRAQ…QHIAAMSRAV (324 aa). Zn(2+) is bound by residues Cys247, Cys310, and Cys311. The region spanning 356-617 is the Pterin-binding domain; the sequence is FVNVGERTNV…LPAELRDAVE (262 aa). One can recognise a B12-binding N-terminal domain in the interval 650 to 744; that stretch reads QQAEWRSWEV…FIEASKEQGK (95 aa). Methylcob(III)alamin is bound by residues Glu694, 756 to 760, His759, Ser804, Thr808, and Ala860; that span reads GDVHD. Residues 746 to 881 form the B12-binding domain; sequence NGKMVIATVK…SDTQRDDFVA (136 aa). Residues 897–1227 form the AdoMet activation domain; that stretch reads KKPRTPPVTL…LAPNLGYDAD (331 aa). Residues Asp946, Arg1134, and 1189-1190 each bind S-adenosyl-L-methionine; that span reads YY.

It belongs to the vitamin-B12 dependent methionine synthase family. The cofactor is methylcob(III)alamin. It depends on Zn(2+) as a cofactor.

The enzyme catalyses (6S)-5-methyl-5,6,7,8-tetrahydrofolate + L-homocysteine = (6S)-5,6,7,8-tetrahydrofolate + L-methionine. Its pathway is amino-acid biosynthesis; L-methionine biosynthesis via de novo pathway; L-methionine from L-homocysteine (MetH route): step 1/1. In terms of biological role, catalyzes the transfer of a methyl group from methyl-cobalamin to homocysteine, yielding enzyme-bound cob(I)alamin and methionine. Subsequently, remethylates the cofactor using methyltetrahydrofolate. The polypeptide is Methionine synthase (metH) (Escherichia coli (strain K12)).